The primary structure comprises 740 residues: ATP-dependent RNA helicase DDX1 (740 aa).

Residues 1–295 (MAAFSEMGVM…APKALIVEPS (295 aa)) are necessary for interaction with HNRNPK. Residues 1-448 (MAAFSEMGVM…DTVHHVVVPV (448 aa)) are interaction with dsRNA. Residues 1–525 (MAAFSEMGVM…KIDCDNLEQY (525 aa)) are necessary for interaction with RELA. One can recognise a Helicase ATP-binding domain in the interval 2-428 (AAFSEMGVMP…SEKIMHFPTW (427 aa)). 46–53 (AETGSGKT) lines the ATP pocket. The B30.2/SPRY domain maps to 70–247 (DQQEGKKGKT…LKFNFGEEEF (178 aa)). Residues Lys-239 and Lys-268 each carry the N6-acetyllysine modification. Lys-281 is subject to N6-acetyllysine; alternate. Lys-281 is covalently cross-linked (Glycyl lysine isopeptide (Lys-Gly) (interchain with G-Cter in SUMO2); alternate). Residues 370–373 (DEAD) carry the DEAD box motif. Position 481 is a phosphoserine (Ser-481). One can recognise a Helicase C-terminal domain in the interval 493–681 (KGEYAVRAIK…QVEPDIKVPV (189 aa)). Residues 525 to 740 (YFMQQGGGPD…YLPNQLFRTF (216 aa)) are necessary for interaction with HNRNPK.

The protein belongs to the DEAD box helicase family. DDX1 subfamily. In terms of assembly, found in a multi-helicase-TICAM1 complex at least composed of DHX36, DDX1, DDX21 and TICAM1; this complex exists in resting cells with or without poly(I:C) RNA ligand stimulation. Interacts with DHX36. Interacts (via B30.2/SPRY domain) with DDX21 (via N-terminus); this interaction serves as bridges to TICAM1. Interacts with FAM98A (via N- and C-terminus). Interacts with MBNL1. Interacts with CSTF2. Interacts with HNRNPK. Interacts with ATM. Interacts with RELA (via C-terminus). Component of the tRNA-splicing ligase complex. Interacts with PHF5A (via C-terminus). Interacts with PQBP1. Interacts with ERCC6. In terms of processing, phosphorylated by ATM kinase; phosphorylation is increased in response to ionizing radiation (IR). In terms of tissue distribution, testis-specific. Expressed in the germ line stem cells, spermatogonia and spermatocytes of the testis. Also expressed in the seminoma and nonseminoma types of testicular germ cell tumors (TGCTs) (at protein level).

It localises to the nucleus. The protein resides in the cytoplasm. It is found in the cytosol. Its subcellular location is the cytoplasmic granule. The protein localises to the mitochondrion. The catalysed reaction is ATP + H2O = ADP + phosphate + H(+). Its function is as follows. Acts as an ATP-dependent RNA helicase, able to unwind both RNA-RNA and RNA-DNA duplexes. Possesses 5' single-stranded RNA overhang nuclease activity. Possesses ATPase activity on various RNA, but not DNA polynucleotides. May play a role in RNA clearance at DNA double-strand breaks (DSBs), thereby facilitating the template-guided repair of transcriptionally active regions of the genome. Together with RELA, acts as a coactivator to enhance NF-kappa-B-mediated transcriptional activation. Acts as a positive transcriptional regulator of cyclin CCND2 expression. Binds to the cyclin CCND2 promoter region. Associates with chromatin at the NF-kappa-B promoter region via association with RELA. Binds to poly(A) RNA. May be involved in 3'-end cleavage and polyadenylation of pre-mRNAs. Component of the tRNA-splicing ligase complex required to facilitate the enzymatic turnover of catalytic subunit RTCB: together with archease (ZBTB8OS), acts by facilitating the guanylylation of RTCB, a key intermediate step in tRNA ligation. Component of a multi-helicase-TICAM1 complex that acts as a cytoplasmic sensor of viral double-stranded RNA (dsRNA) and plays a role in the activation of a cascade of antiviral responses including the induction of pro-inflammatory cytokines via the adapter molecule TICAM1. Specifically binds (via helicase ATP-binding domain) on both short and long poly(I:C) dsRNA. This Mus musculus (Mouse) protein is ATP-dependent RNA helicase DDX1 (Ddx1).